A 289-amino-acid polypeptide reads, in one-letter code: Phosphatidylserine decarboxylase proenzyme (289 aa).

Residues Asp88, His145, and Ser251 each act as charge relay system; for autoendoproteolytic cleavage activity in the active site. Catalysis depends on Ser251, which acts as the Schiff-base intermediate with substrate; via pyruvic acid; for decarboxylase activity. Pyruvic acid (Ser); by autocatalysis is present on Ser251.

The protein belongs to the phosphatidylserine decarboxylase family. PSD-B subfamily. Prokaryotic type I sub-subfamily. As to quaternary structure, heterodimer of a large membrane-associated beta subunit and a small pyruvoyl-containing alpha subunit. The cofactor is pyruvate. Post-translationally, is synthesized initially as an inactive proenzyme. Formation of the active enzyme involves a self-maturation process in which the active site pyruvoyl group is generated from an internal serine residue via an autocatalytic post-translational modification. Two non-identical subunits are generated from the proenzyme in this reaction, and the pyruvate is formed at the N-terminus of the alpha chain, which is derived from the carboxyl end of the proenzyme. The autoendoproteolytic cleavage occurs by a canonical serine protease mechanism, in which the side chain hydroxyl group of the serine supplies its oxygen atom to form the C-terminus of the beta chain, while the remainder of the serine residue undergoes an oxidative deamination to produce ammonia and the pyruvoyl prosthetic group on the alpha chain. During this reaction, the Ser that is part of the protease active site of the proenzyme becomes the pyruvoyl prosthetic group, which constitutes an essential element of the active site of the mature decarboxylase.

The protein resides in the cell membrane. The enzyme catalyses a 1,2-diacyl-sn-glycero-3-phospho-L-serine + H(+) = a 1,2-diacyl-sn-glycero-3-phosphoethanolamine + CO2. It functions in the pathway phospholipid metabolism; phosphatidylethanolamine biosynthesis; phosphatidylethanolamine from CDP-diacylglycerol: step 2/2. Its function is as follows. Catalyzes the formation of phosphatidylethanolamine (PtdEtn) from phosphatidylserine (PtdSer). This Polaromonas naphthalenivorans (strain CJ2) protein is Phosphatidylserine decarboxylase proenzyme.